The sequence spans 277 residues: NADPH-dependent 7-cyano-7-deazaguanine reductase (277 aa).

Substrate is bound at residue 83-85; the sequence is VES. 85 to 86 serves as a coordination point for NADPH; sequence SK. Cys184 serves as the catalytic Thioimide intermediate. Residue Asp191 is the Proton donor of the active site. A substrate-binding site is contributed by 223–224; the sequence is HE. 252-253 lines the NADPH pocket; the sequence is RG.

The protein belongs to the GTP cyclohydrolase I family. QueF type 2 subfamily. As to quaternary structure, homodimer.

It is found in the cytoplasm. It catalyses the reaction 7-aminomethyl-7-carbaguanine + 2 NADP(+) = 7-cyano-7-deazaguanine + 2 NADPH + 3 H(+). Its pathway is tRNA modification; tRNA-queuosine biosynthesis. Functionally, catalyzes the NADPH-dependent reduction of 7-cyano-7-deazaguanine (preQ0) to 7-aminomethyl-7-deazaguanine (preQ1). This is NADPH-dependent 7-cyano-7-deazaguanine reductase from Ralstonia nicotianae (strain ATCC BAA-1114 / GMI1000) (Ralstonia solanacearum).